We begin with the raw amino-acid sequence, 40 residues long: AQCGAQGGGATCPGGLCCSQWGWCGSTPKYCGAGCQSNCR.

Residues 1-40 form the Chitin-binding type-1 domain; the sequence is AQCGAQGGGATCPGGLCCSQWGWCGSTPKYCGAGCQSNCR. 4 disulfide bridges follow: cysteine 3–cysteine 18, cysteine 12–cysteine 24, cysteine 17–cysteine 31, and cysteine 35–cysteine 39.

Not glycosylated.

Its function is as follows. Antimicrobial peptide active against plant pathogenic fungi and Gram-negative and -positive bacteria. The protein is Antimicrobial peptide 2 of Fagopyrum esculentum (Common buckwheat).